Consider the following 409-residue polypeptide: DNA double-strand break repair protein Mre11 (409 aa).

D9, H11, D50, and E85 together coordinate Mn(2+). The active-site Proton donor is H86. Residues H170, H199, and H201 each coordinate Mn(2+).

The protein belongs to the MRE11/RAD32 family. As to quaternary structure, homodimer. Forms a heterotetramer composed of two Mre11 subunits and two Rad50 subunits. Requires Mn(2+) as cofactor.

With respect to regulation, nuclease activity is regulated by Rad50. Part of the Rad50/Mre11 complex, which is involved in the early steps of DNA double-strand break (DSB) repair. The complex may facilitate opening of the processed DNA ends to aid in the recruitment of HerA and NurA. Mre11 binds to DSB ends and has both double-stranded 3'-5' exonuclease activity and single-stranded endonuclease activity. The polypeptide is DNA double-strand break repair protein Mre11 (Aeropyrum pernix (strain ATCC 700893 / DSM 11879 / JCM 9820 / NBRC 100138 / K1)).